A 396-amino-acid polypeptide reads, in one-letter code: Elongation factor Tu (396 aa).

A tr-type G domain is found at Lys10 to Val205. The segment at Gly19–Thr26 is G1. Gly19–Thr26 serves as a coordination point for GTP. Residue Thr26 participates in Mg(2+) binding. Positions Gly62–Asn66 are G2. Positions Asp83 to Gly86 are G3. GTP contacts are provided by residues Asp83–His87 and Asn138–Asp141. Residues Asn138–Asp141 are G4. Positions Ser175–Leu177 are G5.

This sequence belongs to the TRAFAC class translation factor GTPase superfamily. Classic translation factor GTPase family. EF-Tu/EF-1A subfamily. As to quaternary structure, monomer.

It localises to the cytoplasm. The enzyme catalyses GTP + H2O = GDP + phosphate + H(+). Its function is as follows. GTP hydrolase that promotes the GTP-dependent binding of aminoacyl-tRNA to the A-site of ribosomes during protein biosynthesis. This is Elongation factor Tu from Corynebacterium kroppenstedtii (strain DSM 44385 / JCM 11950 / CIP 105744 / CCUG 35717).